Reading from the N-terminus, the 126-residue chain is Phosphoribosyl-AMP cyclohydrolase (126 aa).

D76 serves as a coordination point for Mg(2+). C77 lines the Zn(2+) pocket. 2 residues coordinate Mg(2+): D78 and D80. 2 residues coordinate Zn(2+): C94 and C101.

The protein belongs to the PRA-CH family. In terms of assembly, homodimer. Requires Mg(2+) as cofactor. It depends on Zn(2+) as a cofactor.

Its subcellular location is the cytoplasm. The enzyme catalyses 1-(5-phospho-beta-D-ribosyl)-5'-AMP + H2O = 1-(5-phospho-beta-D-ribosyl)-5-[(5-phospho-beta-D-ribosylamino)methylideneamino]imidazole-4-carboxamide. It functions in the pathway amino-acid biosynthesis; L-histidine biosynthesis; L-histidine from 5-phospho-alpha-D-ribose 1-diphosphate: step 3/9. In terms of biological role, catalyzes the hydrolysis of the adenine ring of phosphoribosyl-AMP. The chain is Phosphoribosyl-AMP cyclohydrolase from Ruthia magnifica subsp. Calyptogena magnifica.